A 192-amino-acid chain; its full sequence is Protein hunchback (192 aa).

Disordered regions lie at residues 16 to 54 and 152 to 192; these read SHHH…SNTN and LTPP…KYMA. A compositionally biased stretch (basic residues) spans 17-28; sequence HHHHHHHAHHSH. Positions 32–41 are enriched in low complexity; sequence SNSNASSPHQ. The segment covering 173 to 192 has biased composition (basic and acidic residues); sequence EPEKEHDLMSNSSEDMKYMA.

It belongs to the hunchback C2H2-type zinc-finger protein family.

The protein localises to the nucleus. In terms of biological role, gap class segmentation protein that controls development of head structures. The chain is Protein hunchback (hb) from Drosophila tanythrix (Fruit fly).